Here is a 460-residue protein sequence, read N- to C-terminus: Mercuric reductase (460 aa).

An HMA domain is found at 1 to 65 (MTHLKITGMT…AVAGLGYKAM (65 aa)). Cys11 and Cys14 together coordinate a metal cation. FAD is bound by residues Ala110, Gly130, and Thr135. Cys136 and Cys141 form a disulfide bridge. FAD is bound by residues Lys145 and Ala211. Residues Cys457 and Cys458 each contribute to the Hg(2+) site.

The protein belongs to the class-I pyridine nucleotide-disulfide oxidoreductase family. Homodimer. The cofactor is FAD.

It carries out the reaction Hg + NADP(+) + H(+) = Hg(2+) + NADPH. Functionally, resistance to Hg(2+) in bacteria appears to be governed by a specialized system which includes mercuric reductase. MerA protein is responsible for volatilizing mercury as Hg(0). The polypeptide is Mercuric reductase (merA) (Serratia marcescens).